Reading from the N-terminus, the 307-residue chain is 17-beta-hydroxysteroid dehydrogenase type 3 (307 aa).

Residues 6-26 (IIFVLTGTCAILVFGGKIASL) form a helical membrane-spanning segment. Residue 47–76 (GKWAVITGGSDGIGRAYAEELSKQGMSVII) participates in NADP(+) binding. Ser187 provides a ligand contact to substrate. Tyr200 serves as the catalytic Proton acceptor.

The protein belongs to the short-chain dehydrogenases/reductases (SDR) family. Expression shows strong sexual dimorphism. In female, highly expressed in ovaries, and at lower levels in skin muscle, eyes and liver. In males, strongly expressed in liver and at lower levels in testis, spleen, kidney, intestine and muscle.

It localises to the endoplasmic reticulum. The protein resides in the membrane. It catalyses the reaction a 17beta-hydroxy steroid + NADP(+) = a 17-oxo steroid + NADPH + H(+). It carries out the reaction testosterone + NADP(+) = androst-4-ene-3,17-dione + NADPH + H(+). The catalysed reaction is 3beta-hydroxyandrost-5-en-17-one + NADPH + H(+) = androst-5-en-3beta,17beta-diol + NADP(+). The enzyme catalyses 3beta-hydroxy-5alpha-androstan-17-one + NADPH + H(+) = 5alpha-androstane-3beta,17beta-diol + NADP(+). It catalyses the reaction androst-4-ene-3,11,17-trione + NADPH + H(+) = 17beta-hydroxyandrost-4-ene-3,11-dione + NADP(+). It carries out the reaction 11beta-hydroxyandrost-4-ene-3,17-dione + NADPH + H(+) = 11beta,17beta-dihydroxyandrost-4-ene-3-one + NADP(+). The protein operates within hormone biosynthesis; testosterone biosynthesis. It functions in the pathway steroid metabolism. Its function is as follows. Catalyzes the conversion of 17-oxosteroids to 17beta-hydroxysteroids in the presence of NADPH. Favors the reduction of androstenedione to testosterone. Testosterone is the key androgen driving male development and function. Among further tested androgens epiandrosterone and dehydroepiandrosterone are accepted as substrates and reduced at C-17. Can also reduce 11-ketoandrostenedione as well as 11beta-hydroxyandrostenedione at C-17 to the respective testosterone forms. Cannot use androsterone and androstanedione as substrates. The sequence is that of 17-beta-hydroxysteroid dehydrogenase type 3 (hsd17b3) from Danio rerio (Zebrafish).